Reading from the N-terminus, the 318-residue chain is MQLFDLPLDQLQTYKPEKTAPKDFSEFWKLSLEELAKVQAEPDLQPVDYPADGVKVYRLTYKSFGNARITGWYAVPDKEGPHPAIVKYHGYNASYDGEIHEMVNWALHGYATFGMLVRGQQSSEDTSISPHGHALGWMTKGILDKDTYYYRGVYLDAVRALEVISSFDEVDETRIGVTGGSQGGGLTIAAAALSDIPKAAVADYPYLSNFERAIDVALEQPYLEINSFFRRNGSPETEVQAMKTLSYFDIMNLADRVKVPVLMSIGLIDKVTPPSTVFAAYNHLETKKELKVYRYFGHEYIPAFQTEKLAFFKQHLKG.

Tyrosine 91 contributes to the substrate binding site. The Nucleophile role is filled by serine 181. Active-site charge relay system residues include aspartate 269 and histidine 298.

It belongs to the carbohydrate esterase 7 family. Homohexamer.

It is found in the cytoplasm. The enzyme catalyses Deacetylation of xylans and xylo-oligosaccharides.. It carries out the reaction cephalosporin C + H2O = deacetylcephalosporin C + acetate + H(+). Its function is as follows. Esterase that removed acetyl groups from a number of O-acetylated small substrates, such as acetylated xylose, short xylooligosaccharides and cephalosporin C. Has no activity towards polymeric acetylated xylan. Cannot cleave amide linkages. The sequence is that of Cephalosporin-C deacetylase (cah) from Bacillus subtilis (strain 168).